We begin with the raw amino-acid sequence, 267 residues long: Thiamine thiazole synthase (267 aa).

NAD(+)-binding positions include Ser41, 60–61 (ER), Gly68, Val132, and 160–162 (HVD). Residues Asp162 and His177 each coordinate Fe cation. Met227 is an NAD(+) binding site. Arg237 serves as a coordination point for glycine.

It belongs to the THI4 family. Homooctamer; tetramer of dimers. Fe(2+) is required as a cofactor.

The catalysed reaction is hydrogen sulfide + glycine + NAD(+) = ADP-5-ethyl-4-methylthiazole-2-carboxylate + nicotinamide + 3 H2O + H(+). It participates in cofactor biosynthesis; thiamine diphosphate biosynthesis. Functionally, involved in the biosynthesis of the thiazole moiety of thiamine. Catalyzes the conversion of NAD and glycine to adenosine diphosphate 5-(2-hydroxyethyl)-4-methylthiazole-2-carboxylate (ADT), an adenylated thiazole intermediate, using free sulfide as a source of sulfur. In Saccharolobus islandicus (strain L.S.2.15 / Lassen #1) (Sulfolobus islandicus), this protein is Thiamine thiazole synthase.